The primary structure comprises 562 residues: Tryptophan 2-monooxygenase (562 aa).

Ser-54, Glu-74, Arg-76, Arg-82, and Arg-104 together coordinate FMN. Substrate is bound at residue Arg-104.

Belongs to the tryptophan 2-monooxygenase family. It depends on FMN as a cofactor.

It carries out the reaction L-tryptophan + O2 = indole-3-acetamide + CO2 + H2O. Its pathway is plant hormone metabolism; auxin biosynthesis. The sequence is that of Tryptophan 2-monooxygenase (iaaM) from Pantoea agglomerans pv. gypsophilae (Erwinia herbicola).